Reading from the N-terminus, the 416-residue chain is MNKQSWLLNLSLLKTHPAFRAVFLARFISIVSLGLLGVAVPVQIQMMTHSTWQVGLSVTLTGGAMFVGLMVGGVLADRYERKKVILLARGTCGIGFIGLCLNALLPEPSLLAIYLLGLWDGFFASLGVTALLAATPALVGRENLMQAGAITMLTVRLGSVNSPMIGGLLLAIGGVAWNYGLAAAGTFITLLPLLSLPALPPPPQPREHPLKSLLAGFRFLLASPLVGGIALLGGLLTMASAVRVLYPALADNWQMSAAQIGFLYAAIPLGAAIGALTSGKLAHSARPGLLMLLSTLGSFLAIGLFGLMPMWILGVVCLALFGWLSAVSSLLQYTMLQTQTPEVMLGRINGLWTAQNVTGDAIGAALLGGLGAMMTPVASASASGFGLLIIGVLLLLVLVELRHFRQTPPQVTASDS.

Topologically, residues 1-21 (MNKQSWLLNLSLLKTHPAFRA) are cytoplasmic. The helical transmembrane segment at 22–42 (VFLARFISIVSLGLLGVAVPV) threads the bilayer. Over 43–55 (QIQMMTHSTWQVG) the chain is Periplasmic. Residues 56-76 (LSVTLTGGAMFVGLMVGGVLA) form a helical membrane-spanning segment. Residues 77-83 (DRYERKK) lie on the Cytoplasmic side of the membrane. Residues 84–104 (VILLARGTCGIGFIGLCLNAL) traverse the membrane as a helical segment. The Periplasmic portion of the chain corresponds to 105-109 (LPEPS). Residues 110 to 130 (LLAIYLLGLWDGFFASLGVTA) form a helical membrane-spanning segment. The Cytoplasmic segment spans residues 131–156 (LLAATPALVGRENLMQAGAITMLTVR). Residues 157–177 (LGSVNSPMIGGLLLAIGGVAW) form a helical membrane-spanning segment. Residue N178 is a topological domain, periplasmic. A helical transmembrane segment spans residues 179-199 (YGLAAAGTFITLLPLLSLPAL). Residues 200–218 (PPPPQPREHPLKSLLAGFR) lie on the Cytoplasmic side of the membrane. A helical transmembrane segment spans residues 219–239 (FLLASPLVGGIALLGGLLTMA). Topologically, residues 240–256 (SAVRVLYPALADNWQMS) are periplasmic. A helical transmembrane segment spans residues 257 to 277 (AAQIGFLYAAIPLGAAIGALT). Topologically, residues 278–287 (SGKLAHSARP) are cytoplasmic. The helical transmembrane segment at 288 to 307 (GLLMLLSTLGSFLAIGLFGL) threads the bilayer. The Periplasmic portion of the chain corresponds to 308 to 313 (MPMWIL). A helical membrane pass occupies residues 314 to 336 (GVVCLALFGWLSAVSSLLQYTML). The Cytoplasmic portion of the chain corresponds to 337–356 (QTQTPEVMLGRINGLWTAQN). A helical transmembrane segment spans residues 357–377 (VTGDAIGAALLGGLGAMMTPV). A topological domain (periplasmic) is located at residue A378. Residues 379-399 (SASASGFGLLIIGVLLLLVLV) traverse the membrane as a helical segment. The Cytoplasmic portion of the chain corresponds to 400–416 (ELRHFRQTPPQVTASDS).

It belongs to the major facilitator superfamily. EntS (TC 2.A.1.38) family.

It is found in the cell inner membrane. Its function is as follows. Component of an export pathway for enterobactin. The chain is Enterobactin exporter EntS from Shigella dysenteriae serotype 1 (strain Sd197).